The primary structure comprises 268 residues: Putative hydro-lyase ABSDF2257 (268 aa).

The protein belongs to the D-glutamate cyclase family.

This chain is Putative hydro-lyase ABSDF2257, found in Acinetobacter baumannii (strain SDF).